The primary structure comprises 180 residues: Regulator of G-protein signaling 8 (180 aa).

Ser26 carries the post-translational modification Phosphoserine. Positions 56–171 constitute an RGS domain; that stretch reads SFDVLLSHKY…FLRSKMYLDL (116 aa).

As to quaternary structure, interacts with GNAO1 and GNAI3. As to expression, expressed at high levels in brain. Very little expression detected in other tissues. Detected in Purkinje cells in the cerebellum.

Its subcellular location is the cell membrane. It is found in the membrane. It localises to the perikaryon. The protein localises to the cell projection. The protein resides in the dendrite. Its subcellular location is the nucleus. Its function is as follows. Regulates G protein-coupled receptor signaling cascades, including signaling via muscarinic acetylcholine receptor CHRM2 and dopamine receptor DRD2. Inhibits signal transduction by increasing the GTPase activity of G protein alpha subunits, thereby driving them into their inactive GDP-bound form. Modulates the activity of potassium channels that are activated in response to DRD2 and CHRM2 signaling. The sequence is that of Regulator of G-protein signaling 8 (Rgs8) from Rattus norvegicus (Rat).